The sequence spans 382 residues: Cysteine desulfurase IscS 1 (382 aa).

Asparagine 149 lines the pyridoxal 5'-phosphate pocket. Cysteine 321 acts as the Cysteine persulfide intermediate in catalysis. Position 321 (cysteine 321) interacts with [2Fe-2S] cluster.

Belongs to the class-V pyridoxal-phosphate-dependent aminotransferase family. NifS/IscS subfamily. In terms of assembly, homodimer. Forms a heterotetramer with IscU, interacts with other sulfur acceptors. Pyridoxal 5'-phosphate is required as a cofactor.

It localises to the cytoplasm. The enzyme catalyses (sulfur carrier)-H + L-cysteine = (sulfur carrier)-SH + L-alanine. It functions in the pathway cofactor biosynthesis; iron-sulfur cluster biosynthesis. Functionally, master enzyme that delivers sulfur to a number of partners involved in Fe-S cluster assembly, tRNA modification or cofactor biosynthesis. Catalyzes the removal of elemental sulfur atoms from cysteine to produce alanine. Functions as a sulfur delivery protein for Fe-S cluster synthesis onto IscU, an Fe-S scaffold assembly protein, as well as other S acceptor proteins. In Archaeoglobus fulgidus (strain ATCC 49558 / DSM 4304 / JCM 9628 / NBRC 100126 / VC-16), this protein is Cysteine desulfurase IscS 1.